The following is a 363-amino-acid chain: UDP-N-acetylglucosamine--N-acetylmuramyl-(pentapeptide) pyrophosphoryl-undecaprenol N-acetylglucosamine transferase (363 aa).

UDP-N-acetyl-alpha-D-glucosamine contacts are provided by residues 14 to 16, Asn-122, Arg-163, Ser-190, and Gln-285; that span reads TGG.

It belongs to the glycosyltransferase 28 family. MurG subfamily.

The protein resides in the cell inner membrane. The catalysed reaction is di-trans,octa-cis-undecaprenyl diphospho-N-acetyl-alpha-D-muramoyl-L-alanyl-D-glutamyl-meso-2,6-diaminopimeloyl-D-alanyl-D-alanine + UDP-N-acetyl-alpha-D-glucosamine = di-trans,octa-cis-undecaprenyl diphospho-[N-acetyl-alpha-D-glucosaminyl-(1-&gt;4)]-N-acetyl-alpha-D-muramoyl-L-alanyl-D-glutamyl-meso-2,6-diaminopimeloyl-D-alanyl-D-alanine + UDP + H(+). It functions in the pathway cell wall biogenesis; peptidoglycan biosynthesis. Cell wall formation. Catalyzes the transfer of a GlcNAc subunit on undecaprenyl-pyrophosphoryl-MurNAc-pentapeptide (lipid intermediate I) to form undecaprenyl-pyrophosphoryl-MurNAc-(pentapeptide)GlcNAc (lipid intermediate II). This chain is UDP-N-acetylglucosamine--N-acetylmuramyl-(pentapeptide) pyrophosphoryl-undecaprenol N-acetylglucosamine transferase, found in Prochlorococcus marinus (strain MIT 9301).